A 550-amino-acid chain; its full sequence is Centrosomal and chromosomal factor (550 aa).

Coiled-coil stretches lie at residues 20–44, 105–126, and 239–274; these read SALS…QQHH, VANS…QQQQ, and ATSA…QQAH. 4 disordered regions span residues 21 to 145, 208 to 320, 361 to 380, and 392 to 465; these read ALSA…KDYS, LSSG…HAAN, SHYA…RDAM, and SGKL…SASV. 3 stretches are compositionally biased toward low complexity: residues 24-71, 81-136, and 221-320; these read ALQQ…QQQQ, ANTS…NAAP, and AAVA…HAAN. 2 stretches are compositionally biased toward low complexity: residues 396-412 and 450-462; these read QQSQ…QQHC and SATP…SGGS.

Homodimer. Interacts with esc, Trl, E(z), scm and ph-p in vitro. Found in vivo in an esc-containing complex, which may be the Esc/E(z) complex. Also found in vivo in a Pc-containing complex that may be the PRC1 complex, but does not interact with Pc directly. Interacts with cyclin CycG.

It localises to the nucleus. It is found in the cytoplasm. The protein resides in the cytoskeleton. Its subcellular location is the microtubule organizing center. The protein localises to the centrosome. It localises to the chromosome. In terms of biological role, essential protein required for proper condensation of mitotic chromosomes and progression through mitosis. Binds to specific polytene chromosome sites, many of which are shared with the posterior sex combs (Psc) protein. Involved in maintaining Abd-B repression outside its normal expression domain. The protein is Centrosomal and chromosomal factor (corto) of Drosophila melanogaster (Fruit fly).